Consider the following 177-residue polypeptide: R-phycoerythrin beta chain (177 aa).

Asn35 and Asp39 together coordinate (2R,3E)-phycoerythrobilin. 3 residues coordinate phycourobilin: Cys50, Asp54, and Cys61. (2R,3E)-phycoerythrobilin contacts are provided by residues Asn72, 77 to 78 (RR), Cys82, and 84 to 85 (RD). Asn72 is modified (N4-methylasparagine). 147-148 (SQ) is a phycourobilin binding site. 2 residues coordinate (2R,3E)-phycoerythrobilin: Ile154 and Cys158.

Belongs to the phycobiliprotein family. Heterododecamer of 6 alpha and 6 beta chains. The basic functional unit of phycobiliproteins is a ring-shaped hexamer formed from two back-to-back trimers contacting via the alpha chain subunits. The trimers are composed of alpha/beta subunit heterodimers arranged around a three-fold axis of symmetry. The phycoerythrins also contain a gamma subunit which is located in the center of the hexamer. Post-translationally, contains two covalently linked phycoerythrobilin chromophores and one covalently linked phycourobilin chromophore.

The protein resides in the plastid. It localises to the chloroplast thylakoid membrane. Light-harvesting photosynthetic tetrapyrrole chromophore-protein from the phycobiliprotein complex. This Agarophyton chilense (Red seaweed) protein is R-phycoerythrin beta chain (rpeB).